A 226-amino-acid chain; its full sequence is PKHD-type hydroxylase mma_3618 (226 aa).

Positions 78 to 178 (RYMPPLFNRY…RISSFFWVQS (101 aa)) constitute a Fe2OG dioxygenase domain. The Fe cation site is built by His-96, Asp-98, and His-159. Arg-169 lines the 2-oxoglutarate pocket.

It depends on Fe(2+) as a cofactor. Requires L-ascorbate as cofactor.

The chain is PKHD-type hydroxylase mma_3618 from Janthinobacterium sp. (strain Marseille) (Minibacterium massiliensis).